The sequence spans 280 residues: 3-methyl-2-oxobutanoate hydroxymethyltransferase (280 aa).

Mg(2+) is bound by residues Asp-49 and Asp-88. 3-methyl-2-oxobutanoate is bound by residues 49-50 (DS), Asp-88, and Lys-118. Glu-120 provides a ligand contact to Mg(2+). Catalysis depends on Glu-187, which acts as the Proton acceptor.

This sequence belongs to the PanB family. Homodecamer; pentamer of dimers. Mg(2+) serves as cofactor.

It localises to the cytoplasm. The enzyme catalyses 3-methyl-2-oxobutanoate + (6R)-5,10-methylene-5,6,7,8-tetrahydrofolate + H2O = 2-dehydropantoate + (6S)-5,6,7,8-tetrahydrofolate. It functions in the pathway cofactor biosynthesis; (R)-pantothenate biosynthesis; (R)-pantoate from 3-methyl-2-oxobutanoate: step 1/2. Catalyzes the reversible reaction in which hydroxymethyl group from 5,10-methylenetetrahydrofolate is transferred onto alpha-ketoisovalerate to form ketopantoate. The protein is 3-methyl-2-oxobutanoate hydroxymethyltransferase of Xanthobacter autotrophicus (strain ATCC BAA-1158 / Py2).